The sequence spans 450 residues: Tubulin beta-1 chain (450 aa).

GTP-binding residues include Gln11, Glu69, Ser138, Gly142, Thr143, Gly144, Asn204, and Asn226. Mg(2+) is bound at residue Glu69. Positions 426–450 (QDATADEDEYGEEEGDEEEYGQHDI) are disordered. The segment covering 429–444 (TADEDEYGEEEGDEEE) has biased composition (acidic residues).

This sequence belongs to the tubulin family. Dimer of alpha and beta chains. A typical microtubule is a hollow water-filled tube with an outer diameter of 25 nm and an inner diameter of 15 nM. Alpha-beta heterodimers associate head-to-tail to form protofilaments running lengthwise along the microtubule wall with the beta-tubulin subunit facing the microtubule plus end conferring a structural polarity. Microtubules usually have 13 protofilaments but different protofilament numbers can be found in some organisms and specialized cells. It depends on Mg(2+) as a cofactor.

The protein resides in the cytoplasm. It is found in the cytoskeleton. In terms of biological role, tubulin is the major constituent of microtubules, a cylinder consisting of laterally associated linear protofilaments composed of alpha- and beta-tubulin heterodimers. Microtubules grow by the addition of GTP-tubulin dimers to the microtubule end, where a stabilizing cap forms. Below the cap, tubulin dimers are in GDP-bound state, owing to GTPase activity of alpha-tubulin. This chain is Tubulin beta-1 chain (TUBB1), found in Pisum sativum (Garden pea).